The chain runs to 142 residues: DNA-directed RNA polymerase subunit omega (142 aa).

Residues 104 to 142 (FNTDADVDQESTDIQDDEVENEMSNQDSEDIDDEVDNEE) are disordered. The span at 108-142 (ADVDQESTDIQDDEVENEMSNQDSEDIDDEVDNEE) shows a compositional bias: acidic residues.

It belongs to the RNA polymerase subunit omega family. In terms of assembly, the RNAP catalytic core consists of 2 alpha, 1 beta, 1 beta' and 1 omega subunit. When a sigma factor is associated with the core the holoenzyme is formed, which can initiate transcription.

The enzyme catalyses RNA(n) + a ribonucleoside 5'-triphosphate = RNA(n+1) + diphosphate. In terms of biological role, promotes RNA polymerase assembly. Latches the N- and C-terminal regions of the beta' subunit thereby facilitating its interaction with the beta and alpha subunits. In Wolbachia sp. subsp. Brugia malayi (strain TRS), this protein is DNA-directed RNA polymerase subunit omega.